The following is a 63-amino-acid chain: Large ribosomal subunit protein bL32 (63 aa).

The span at 1-18 shows a compositional bias: basic residues; that stretch reads MPVPKRKTSPSRRGKRRS. The tract at residues 1–26 is disordered; that stretch reads MPVPKRKTSPSRRGKRRSHDGLRPEN.

It belongs to the bacterial ribosomal protein bL32 family.

The protein is Large ribosomal subunit protein bL32 of Neorickettsia sennetsu (strain ATCC VR-367 / Miyayama) (Ehrlichia sennetsu).